We begin with the raw amino-acid sequence, 707 residues long: Ferric reduction oxidase 5 (707 aa).

Residues 1–9 lie on the Cytoplasmic side of the membrane; it reads MGNMRSLVK. A helical transmembrane segment spans residues 10–29; the sequence is MLMVVLFLGWIFVWIMISTN. Over 30-54 the chain is Extracellular; it reads RFQNIWTPKLAKYLKTTYFGPQGMN. Residues 55–73 traverse the membrane as a helical segment; that stretch reads LVLLTVPMMFIAVLSCVYL. Residues 74–106 lie on the Cytoplasmic side of the membrane; the sequence is HTQKQPSQTQSLYKCREWKVKGRMGRVMMVMNP. A helical transmembrane segment spans residues 107–130; that stretch reads LGIVTATELTFSLLFLALLVWALS. Over 131 to 198 the chain is Extracellular; the sequence is NYLYLSYHVH…VGLTSESSIK (68 aa). Residues 165-284 form the Ferric oxidoreductase domain; the sequence is GYVGHYCWAF…HLYGLYIVFY (120 aa). Residues 199-222 traverse the membrane as a helical segment; that stretch reads YHIWLGHVSNFCFLVHTVVFLIYW. Heme is bound by residues H200 and H214. The Cytoplasmic portion of the chain corresponds to 223-272; sequence AMVNKLMETFAWNATYVPNLAGTIAMVIGIAIWVTSLPSFRRKKFEIFFY. The chain crosses the membrane as a helical span at residues 273 to 297; it reads THHLYGLYIVFYAIHVGDSWFCMIL. The heme site is built by H274 and H287. Residues 298-319 are Extracellular-facing; it reads PNIFLFFIDRYLRFLQSTKRSR. Positions 313–416 constitute an FAD-binding FR-type domain; that stretch reads QSTKRSRLVS…EGPYGPNSFD (104 aa). Residues 320–340 form a helical membrane-spanning segment; the sequence is LVSAKILPSDNLELTFAKTSG. The Cytoplasmic segment spans residues 341–533; it reads LHYTPTSILF…PISPVLGPNN (193 aa). Position 362 to 365 (362 to 365) interacts with FAD; it reads HPFT. An NAD(+)-binding site is contributed by 408 to 411; sequence GPYG. A helical transmembrane segment spans residues 534-556; the sequence is FLWLGVVILSSFVMFLLLIGIVT. The Extracellular portion of the chain corresponds to 557–576; it reads RYYIYPVDHNTGSIYNFTYR. The chain crosses the membrane as a helical span at residues 577–598; that stretch reads VLWVMFLGCVCIFISSSIIFLW. The Cytoplasmic segment spans residues 599–707; it reads RKKENKEGDK…LHFEAISFNW (109 aa). Positions 608-630 are disordered; sequence KDSKKQVQSVEFQTPTSSPGSWF. Positions 613–627 are enriched in polar residues; the sequence is QVQSVEFQTPTSSPG.

Belongs to the ferric reductase (FRE) family. FAD serves as cofactor. Expressed at low levels in roots, shoots, pedicels and inflorescence stems, flowers, sepals, stigmas and anther filaments.

The protein resides in the cell membrane. It carries out the reaction 2 a Fe(II)-siderophore + NAD(+) + H(+) = 2 a Fe(III)-siderophore + NADH. Functionally, ferric chelate reductase probably involved in iron reduction in shoots. May participate in the transport of electrons to a Fe(3+) ion via FAD and heme intermediates. May act in iron metabolism in reproductive organs. May function as root surface cupric chelate reductase and participate in the reduction of Cu(2+), for Cu(+) acquisition via Cu(+) transporters in response to copper deficiency. This Arabidopsis thaliana (Mouse-ear cress) protein is Ferric reduction oxidase 5 (FRO5).